A 322-amino-acid chain; its full sequence is MDSIHGHYHIQLSNYSAGENLQSATLTEGVIGAHRVKVETALSHSNRQKKLSATIKHNQSSRSMLDRKLTSDGKVNQRSSFTFSMIMYRMIHFVLSTRVPAVRESVANYGGNINFKFAQTKGAFLHQIIKHSDTARGACEALCAHWIRSHAQGQSLFDQLYVGGRKGKFQIDTLYSIKQLQIDGCKADVDQDEVTLDWLKKNGISERMIERHCLLPTVDVTGTTGSEGPDQLLNAILDTHGIGYGYKKIYLSGQMSGHTIAAYVNENSGVTFFDPNFGEFHFSDKEQFSKWFTNSFWENSMYHYPLGVGQSFSVFTFDSKEV.

Active-site residues include Cys-139, His-258, and Asp-274.

Belongs to the peptidase C58 family. In terms of assembly, interacts with human ARHA.

The protein localises to the secreted. Functionally, cysteine protease, which is translocated into infected cells and plays a central role in pathogenesis by cleaving the C-terminus end of the human small GTPase RhoA/ARHA, a regulator of cytoskeleton. Once cleaved, ARHA loses its lipid modification, and is released from the cell membrane, leading to the subsequent disruption of actin cytoskeleton of the host cell. In Yersinia enterocolitica, this protein is Cysteine protease yopT1 (yopT1).